A 79-amino-acid polypeptide reads, in one-letter code: Acyl carrier protein (79 aa).

Positions 4 to 79 (EQILVDVQEA…DVVAYIETKL (76 aa)) constitute a Carrier domain. Position 39 is an O-(pantetheine 4'-phosphoryl)serine (S39).

It belongs to the acyl carrier protein (ACP) family. Post-translationally, 4'-phosphopantetheine is transferred from CoA to a specific serine of apo-ACP by AcpS. This modification is essential for activity because fatty acids are bound in thioester linkage to the sulfhydryl of the prosthetic group.

The protein localises to the cytoplasm. Its pathway is lipid metabolism; fatty acid biosynthesis. Carrier of the growing fatty acid chain in fatty acid biosynthesis. This Exiguobacterium sp. (strain ATCC BAA-1283 / AT1b) protein is Acyl carrier protein.